A 640-amino-acid polypeptide reads, in one-letter code: GATA zinc finger domain-containing protein 12 (640 aa).

Disordered regions lie at residues 121–209 and 355–390; these read SNNI…NIPI and QQIR…HINN. Low complexity-rich tracts occupy residues 122–209 and 355–379; these read NNIP…NIPI and QQIR…QHQQ. Over residues 380 to 390 the composition is skewed to polar residues; the sequence is PPTNIPQHINN. The segment at 506–531 adopts a GATA-type zinc-finger fold; sequence CVNCKTSDTPEWRRGPQGAKTLCNAC.

This Dictyostelium discoideum (Social amoeba) protein is GATA zinc finger domain-containing protein 12 (gtaL).